A 409-amino-acid chain; its full sequence is Argininosuccinate synthase (409 aa).

Residues 8 to 16 and Ala-34 contribute to the ATP site; that span reads AYSGGLDTS. Tyr-85 serves as a coordination point for L-citrulline. Gly-115 lines the ATP pocket. The L-aspartate site is built by Thr-117, Asn-121, and Asp-122. Asn-121 contributes to the L-citrulline binding site. 5 residues coordinate L-citrulline: Arg-125, Ser-178, Ser-187, Glu-268, and Tyr-280.

This sequence belongs to the argininosuccinate synthase family. Type 1 subfamily. As to quaternary structure, homotetramer.

Its subcellular location is the cytoplasm. It catalyses the reaction L-citrulline + L-aspartate + ATP = 2-(N(omega)-L-arginino)succinate + AMP + diphosphate + H(+). The protein operates within amino-acid biosynthesis; L-arginine biosynthesis; L-arginine from L-ornithine and carbamoyl phosphate: step 2/3. The protein is Argininosuccinate synthase of Thermotoga maritima (strain ATCC 43589 / DSM 3109 / JCM 10099 / NBRC 100826 / MSB8).